A 140-amino-acid chain; its full sequence is Putative pre-16S rRNA nuclease (140 aa).

Belongs to the YqgF nuclease family.

Its subcellular location is the cytoplasm. In terms of biological role, could be a nuclease involved in processing of the 5'-end of pre-16S rRNA. This chain is Putative pre-16S rRNA nuclease, found in Vibrio vulnificus (strain YJ016).